Here is a 1079-residue protein sequence, read N- to C-terminus: Translation initiation factor IF-2 (1079 aa).

3 stretches are compositionally biased toward basic and acidic residues: residues Val-52 to Asn-65, Arg-75 to Glu-90, and Ala-102 to Gln-134. Positions Val-52–Ala-488 are disordered. Low complexity predominate over residues Ala-150–Thr-184. Residues Val-185–Ala-194 are compositionally biased toward basic and acidic residues. Positions Ala-276 to Gln-291 are enriched in low complexity. The segment covering Gly-306 to Gly-327 has biased composition (basic and acidic residues). Low complexity-rich tracts occupy residues Glu-348–Pro-370 and Pro-380–Pro-398. The span at Pro-419–Gly-429 shows a compositional bias: gly residues. Residues Pro-461–Arg-471 show a composition bias toward basic and acidic residues. A compositionally biased stretch (basic residues) spans Pro-473–Lys-482. In terms of domain architecture, tr-type G spans Thr-578–Glu-745. Residues Gly-587 to Thr-594 form a G1 region. Residue Gly-587–Thr-594 coordinates GTP. The G2 stretch occupies residues Gly-612–His-616. The G3 stretch occupies residues Asp-633–Gly-636. Residues Asp-633–His-637 and Asn-687–Asp-690 each bind GTP. The G4 stretch occupies residues Asn-687–Asp-690. The segment at Ser-723–Lys-725 is G5.

It belongs to the TRAFAC class translation factor GTPase superfamily. Classic translation factor GTPase family. IF-2 subfamily.

The protein localises to the cytoplasm. Its function is as follows. One of the essential components for the initiation of protein synthesis. Protects formylmethionyl-tRNA from spontaneous hydrolysis and promotes its binding to the 30S ribosomal subunits. Also involved in the hydrolysis of GTP during the formation of the 70S ribosomal complex. The chain is Translation initiation factor IF-2 from Nitratidesulfovibrio vulgaris (strain ATCC 29579 / DSM 644 / CCUG 34227 / NCIMB 8303 / VKM B-1760 / Hildenborough) (Desulfovibrio vulgaris).